Consider the following 149-residue polypeptide: Calmodulin (149 aa).

Position 2 is an N-acetylalanine (alanine 2). 4 consecutive EF-hand domains span residues glutamate 8–asparagine 43, proline 44–aspartate 79, aspartate 81–lysine 116, and leucine 117–lysine 149. Residues aspartate 21, aspartate 23, aspartate 25, glutamine 27, glutamate 32, aspartate 57, aspartate 59, asparagine 61, threonine 63, glutamate 68, aspartate 94, aspartate 96, asparagine 98, glutamate 105, aspartate 130, aspartate 132, aspartate 134, arginine 136, and glutamate 141 each contribute to the Ca(2+) site.

Belongs to the calmodulin family.

In terms of biological role, calmodulin mediates the control of a large number of enzymes, ion channels and other proteins by Ca(2+). Among the enzymes to be stimulated by the calmodulin-Ca(2+) complex are a number of protein kinases and phosphatases. This chain is Calmodulin, found in Colletotrichum gloeosporioides (Anthracnose fungus).